A 288-amino-acid chain; its full sequence is 2-hydroxy-6-oxononadienedioate/2-hydroxy-6-oxononatrienedioate hydrolase (288 aa).

The AB hydrolase-1 domain maps to 38–274; that stretch reads ALVLLHGSGP…RCGHWAQWEH (237 aa). H268 functions as the Proton acceptor in the catalytic mechanism.

Belongs to the AB hydrolase superfamily. MhpC family. In terms of assembly, homodimer.

The enzyme catalyses (2Z,4E)-2-hydroxy-6-oxonona-2,4-dienedioate + H2O = (2Z)-2-hydroxypenta-2,4-dienoate + succinate + H(+). It carries out the reaction (2Z,4E,7E)-2-hydroxy-6-oxonona-2,4,7-trienedioate + H2O = (2Z)-2-hydroxypenta-2,4-dienoate + fumarate + H(+). Its pathway is aromatic compound metabolism; 3-phenylpropanoate degradation. In terms of biological role, catalyzes the cleavage of the C5-C6 bond of 2-hydroxy-6-oxononadienedioate and 2-hydroxy-6-oxononatrienedioate, a dienol ring fission product of the bacterial meta-cleavage pathway for degradation of phenylpropionic acid. In Burkholderia vietnamiensis (strain G4 / LMG 22486) (Burkholderia cepacia (strain R1808)), this protein is 2-hydroxy-6-oxononadienedioate/2-hydroxy-6-oxononatrienedioate hydrolase.